A 354-amino-acid polypeptide reads, in one-letter code: Rhodopsin (354 aa).

At 1-36 (MNGTEGPYFNVPMVNTTGIVRSPYEYPQYYLVSPAA) the chain is on the extracellular side. N-linked (GlcNAc...) asparagine glycans are attached at residues N2 and N15. A helical membrane pass occupies residues 37-61 (YAALGAYMFFLILVGFPINFLTLYV). Residues 62–73 (TLEHKKLRTPLN) lie on the Cytoplasmic side of the membrane. Residues 74–96 (YILLNLAVADLFMVFGGFTTTMY) traverse the membrane as a helical segment. Residues 97–110 (TSMHGYFVLGRLGC) are Extracellular-facing. A disulfide bond links C110 and C187. A helical membrane pass occupies residues 111–133 (NLEGFFATLGGEIGLWSLVVLAI). The 'Ionic lock' involved in activated form stabilization motif lies at 134-136 (ERW). Residues 134-152 (ERWVVVCKPISNFRFGENH) lie on the Cytoplasmic side of the membrane. The chain crosses the membrane as a helical span at residues 153–173 (AIMGLVFTWIMAASCAVPPLV). The Extracellular portion of the chain corresponds to 174–202 (GWSRYIPEGMQCSCGVDYYTRAEGFNNES). A helical transmembrane segment spans residues 203–224 (FVVYMFVCHFLIPLIVVFFCYG). The Cytoplasmic segment spans residues 225–252 (RLLCAVKEAAAAQQESETTQRAEREVTR). A helical membrane pass occupies residues 253–274 (MVVIMVIGFLVCWLPYASVAWY). The Extracellular portion of the chain corresponds to 275-286 (IFTNQGSEFGPL). The helical transmembrane segment at 287–308 (FMTIPAFFAKSSSIYNPAIYIC) threads the bilayer. K296 bears the N6-(retinylidene)lysine mark. The Cytoplasmic portion of the chain corresponds to 309–354 (MNKQFRNCMITTLCCGKNPFEEEEGASTTASKTEASSVSSSSVSPA). 2 S-palmitoyl cysteine lipidation sites follow: C322 and C323. Positions 332–354 (EGASTTASKTEASSVSSSSVSPA) are disordered. The segment covering 334-354 (ASTTASKTEASSVSSSSVSPA) has biased composition (low complexity).

It belongs to the G-protein coupled receptor 1 family. Opsin subfamily. In terms of processing, phosphorylated on some or all of the serine and threonine residues present in the C-terminal region. Post-translationally, contains one covalently linked retinal chromophore.

Its subcellular location is the membrane. It is found in the cell projection. It localises to the cilium. The protein localises to the photoreceptor outer segment. Photoreceptor required for image-forming vision at low light intensity. While most salt water fish species use retinal as chromophore, most freshwater fish use 3-dehydroretinal, or a mixture of retinal and 3-dehydroretinal. Light-induced isomerization of 11-cis to all-trans retinal triggers a conformational change that activates signaling via G-proteins. Subsequent receptor phosphorylation mediates displacement of the bound G-protein alpha subunit by arrestin and terminates signaling. The protein is Rhodopsin (rho) of Oryzias latipes (Japanese rice fish).